We begin with the raw amino-acid sequence, 189 residues long: Parkinson disease protein 7 homolog (189 aa).

Residues cysteine 46 and cysteine 53 are each lipidated (S-palmitoyl cysteine). Position 67 is a phosphotyrosine (tyrosine 67). Residue cysteine 106 is the site of S-palmitoyl cysteine attachment. The active-site Nucleophile is cysteine 106. At cysteine 106 the chain carries Cysteine sulfinic acid (-SO2H). Residue cysteine 106 is modified to Cysteine sulfinic acid (-SO2H); alternate. Cysteine 106 carries the S-palmitoyl cysteine; alternate lipid modification. Residue histidine 126 is part of the active site. Residue lysine 130 forms a Glycyl lysine isopeptide (Lys-Gly) (interchain with G-Cter in SUMO) linkage. Lysine 148 is subject to N6-acetyllysine. Lysine 182 carries the N6-succinyllysine modification.

The protein belongs to the peptidase C56 family. As to quaternary structure, homodimer. It depends on Deglycase activity does not require glutathione as a cofactor, however, glycated glutathione constitutes a PARK7 substrate. as a cofactor. In terms of processing, sumoylated on Lys-130 by pias2 or pias4; which is essential for cell-growth promoting activity and transforming activity. Post-translationally, undergoes cleavage of a C-terminal peptide and subsequent activation of protease activity in response to oxidative stress. In terms of tissue distribution, larval brain and gut from 96 hours post-fertilization (hpf). Ubiquitous in adult; most abundant in brain, eye, heart and muscle. Within brain, neuronal expression is widespread, particularly in the cerebellum, medullary reticular formation and diencephalon. Expressed in major forebrain and diencephalic dopaminergic cell groups.

Its subcellular location is the cell membrane. The protein localises to the cytoplasm. It is found in the nucleus. The protein resides in the membrane raft. It localises to the mitochondrion. Its subcellular location is the endoplasmic reticulum. It catalyses the reaction N(omega)-(1-hydroxy-2-oxopropyl)-L-arginyl-[protein] + H2O = lactate + L-arginyl-[protein] + H(+). The catalysed reaction is N(6)-(1-hydroxy-2-oxopropyl)-L-lysyl-[protein] + H2O = lactate + L-lysyl-[protein] + H(+). It carries out the reaction S-(1-hydroxy-2-oxopropyl)-L-cysteinyl-[protein] + H2O = lactate + L-cysteinyl-[protein] + H(+). The enzyme catalyses N(omega)-(1-hydroxy-2-oxoethyl)-L-arginyl-[protein] + H2O = L-arginyl-[protein] + glycolate + H(+). It catalyses the reaction N(6)-(1-hydroxy-2-oxoethyl)-L-lysyl-[protein] + H2O = glycolate + L-lysyl-[protein] + H(+). The catalysed reaction is S-(1-hydroxy-2-oxoethyl)-L-cysteinyl-[protein] + H2O = glycolate + L-cysteinyl-[protein] + H(+). It carries out the reaction N(2)-(1-hydroxy-2-oxopropyl)-dGTP + H2O = lactate + dGTP + H(+). The enzyme catalyses N(2)-(1-hydroxy-2-oxopropyl)-GTP + H2O = lactate + GTP + H(+). It catalyses the reaction N(2)-(1-hydroxy-2-oxopropyl)-GDP + H2O = lactate + GDP + H(+). The catalysed reaction is N(2)-(1-hydroxy-2-oxopropyl)-GMP + H2O = lactate + GMP + H(+). It carries out the reaction N(2)-(1-hydroxy-2-oxoethyl)-dGTP + H2O = dGTP + glycolate + H(+). The enzyme catalyses N(2)-(1-hydroxy-2-oxoethyl)-GTP + H2O = glycolate + GTP + H(+). It catalyses the reaction N(2)-(1-hydroxy-2-oxoethyl)-GDP + H2O = glycolate + GDP + H(+). The catalysed reaction is N(2)-(1-hydroxy-2-oxoethyl)-GMP + H2O = glycolate + GMP + H(+). It carries out the reaction an N(2)-(1-hydroxy-2-oxopropyl)-guanosine in RNA + H2O = a guanosine in RNA + lactate + H(+). The enzyme catalyses an N(2)-(1-hydroxy-2-oxopropyl)-2'-deoxyguanosine in DNA + H2O = a 2'-deoxyguanosine in DNA + lactate + H(+). It catalyses the reaction an N(2)-(1-hydroxy-2-oxoethyl)-guanosine in RNA + H2O = a guanosine in RNA + glycolate + H(+). The catalysed reaction is an N(2)-(1-hydroxy-2-oxoethyl)-2'-deoxyguanosine in DNA + H2O = a 2'-deoxyguanosine in DNA + glycolate + H(+). In terms of biological role, multifunctional protein with controversial molecular function which plays an important role in cell protection against oxidative stress and cell death acting as oxidative stress sensor and redox-sensitive chaperone and protease. It is involved in neuroprotective mechanisms like the stabilization of NFE2L2 and PINK1 proteins, male fertility as a positive regulator of androgen signaling pathway as well as cell growth and transformation through, for instance, the modulation of NF-kappa-B signaling pathway. Has been described as a protein and nucleotide deglycase that catalyzes the deglycation of the Maillard adducts formed between amino groups of proteins or nucleotides and reactive carbonyl groups of glyoxals. But this function is rebuted by other works. As a protein deglycase, repairs methylglyoxal- and glyoxal-glycated proteins, and releases repaired proteins and lactate or glycolate, respectively. Deglycates cysteine, arginine and lysine residues in proteins, and thus reactivates these proteins by reversing glycation by glyoxals. Acts on early glycation intermediates (hemithioacetals and aminocarbinols), preventing the formation of advanced glycation endproducts (AGE) that cause irreversible damage. Also functions as a nucleotide deglycase able to repair glycated guanine in the free nucleotide pool (GTP, GDP, GMP, dGTP) and in DNA and RNA. Is thus involved in a major nucleotide repair system named guanine glycation repair (GG repair), dedicated to reversing methylglyoxal and glyoxal damage via nucleotide sanitization and direct nucleic acid repair. Protects histones from adduction by methylglyoxal, controls the levels of methylglyoxal-derived argininine modifications on chromatin. Displays a very low glyoxalase activity that may reflect its deglycase activity. It is involved in neuroprotective mechanisms as well as cell growth and transformation. Its involvement in protein repair could also explain other unrelated functions. Eliminates hydrogen peroxide and protects cells against hydrogen peroxide-induced cell death. Required for correct mitochondrial morphology and function as well as for autophagy of dysfunctional mitochondria. Regulates astrocyte inflammatory responses, may modulate lipid rafts-dependent endocytosis in astrocytes and neuronal cells. Binds to a number of mRNAs containing multiple copies of GG or CC motifs and partially inhibits their translation but dissociates following oxidative stress. Metal-binding protein able to bind copper as well as toxic mercury ions, enhances the cell protection mechanism against induced metal toxicity. The protein is Parkinson disease protein 7 homolog of Danio rerio (Zebrafish).